The chain runs to 253 residues: Hydroxyacylglutathione hydrolase (253 aa).

Zn(2+)-binding residues include histidine 54, histidine 56, aspartate 58, histidine 59, histidine 110, aspartate 127, and histidine 165.

It belongs to the metallo-beta-lactamase superfamily. Glyoxalase II family. In terms of assembly, monomer. Zn(2+) serves as cofactor.

The enzyme catalyses an S-(2-hydroxyacyl)glutathione + H2O = a 2-hydroxy carboxylate + glutathione + H(+). The protein operates within secondary metabolite metabolism; methylglyoxal degradation; (R)-lactate from methylglyoxal: step 2/2. Functionally, thiolesterase that catalyzes the hydrolysis of S-D-lactoyl-glutathione to form glutathione and D-lactic acid. This is Hydroxyacylglutathione hydrolase from Idiomarina loihiensis (strain ATCC BAA-735 / DSM 15497 / L2-TR).